The following is a 507-amino-acid chain: ATP synthase subunit alpha, chloroplastic (507 aa).

An ATP-binding site is contributed by 170 to 177 (IGDRQTGK).

It belongs to the ATPase alpha/beta chains family. In terms of assembly, F-type ATPases have 2 components, CF(1) - the catalytic core - and CF(0) - the membrane proton channel. CF(1) has five subunits: alpha(3), beta(3), gamma(1), delta(1), epsilon(1). CF(0) has four main subunits: a, b, b' and c.

It is found in the plastid. Its subcellular location is the chloroplast thylakoid membrane. The enzyme catalyses ATP + H2O + 4 H(+)(in) = ADP + phosphate + 5 H(+)(out). Functionally, produces ATP from ADP in the presence of a proton gradient across the membrane. The alpha chain is a regulatory subunit. In Adiantum capillus-veneris (Maidenhair fern), this protein is ATP synthase subunit alpha, chloroplastic.